We begin with the raw amino-acid sequence, 222 residues long: Superoxide dismutase [Mn], mitochondrial (222 aa).

A mitochondrion-targeting transit peptide spans 1-24; sequence MLCRAACSTGRRLGPVAGAAGSRH. Residue His-50 coordinates Mn(2+). Tyr-58 is subject to 3'-nitrotyrosine. An N6-acetyllysine; alternate mark is found at Lys-68 and Lys-75. 2 positions are modified to N6-succinyllysine; alternate: Lys-68 and Lys-75. His-98 contributes to the Mn(2+) binding site. N6-acetyllysine is present on Lys-114. An N6-acetyllysine; alternate mark is found at Lys-122 and Lys-130. N6-succinyllysine; alternate occurs at positions 122 and 130. Mn(2+) is bound by residues Asp-183 and His-187. Lys-202 is modified (N6-acetyllysine).

This sequence belongs to the iron/manganese superoxide dismutase family. In terms of assembly, homotetramer. The cofactor is Mn(2+). Nitrated under oxidative stress. Nitration coupled with oxidation inhibits the catalytic activity. Post-translationally, acetylation at Lys-122 decreases enzymatic activity. Deacetylated by SIRT3 upon exposure to ionizing radiations or after long fasting. In terms of processing, polyubiquitinated; leading to proteasomal degradation. Deubiquitinated by USP36 which increases protein stability.

The protein localises to the mitochondrion matrix. It catalyses the reaction 2 superoxide + 2 H(+) = H2O2 + O2. Destroys superoxide anion radicals which are normally produced within the cells and which are toxic to biological systems. This Mus musculus (Mouse) protein is Superoxide dismutase [Mn], mitochondrial (Sod2).